The primary structure comprises 242 residues: Uridylate kinase (242 aa).

ATP is bound at residue K12–G15. The involved in allosteric activation by GTP stretch occupies residues G20 to G25. Residue G54 participates in UMP binding. ATP contacts are provided by G55 and R59. UMP-binding positions include D74 and T135 to T142. Positions 162, 168, and 171 each coordinate ATP.

Belongs to the UMP kinase family. As to quaternary structure, homohexamer.

The protein resides in the cytoplasm. It carries out the reaction UMP + ATP = UDP + ADP. It participates in pyrimidine metabolism; CTP biosynthesis via de novo pathway; UDP from UMP (UMPK route): step 1/1. Allosterically activated by GTP. Inhibited by UTP. Its function is as follows. Catalyzes the reversible phosphorylation of UMP to UDP. This chain is Uridylate kinase, found in Pasteurella multocida (strain Pm70).